A 487-amino-acid chain; its full sequence is 1-hydroxycarotenoid 3,4-desaturase (487 aa).

Residues glycine 12, glutamate 31, lysine 39, 55 to 56, valine 247, asparagine 275, leucine 431, glycine 461, and 468 to 469 contribute to the FAD site; these read SL and GI.

Belongs to the carotenoid/retinoid oxidoreductase family. In terms of assembly, monomer.

The catalysed reaction is rhodopin + A = (3E)-3,4-didehydrorhodopin + AH2. It catalyses the reaction 1'-hydroxy-gamma-carotene + A = 1'-hydroxytorulene + AH2. The enzyme catalyses 1-hydroxy-all-trans-1,2-dihydro-neurosporene + A = demethylspheroidene + AH2. It carries out the reaction 1,1'-dihydroxy-1,1',2,2'-tetrahydroneurosporene + A = 1'-hydroxy-demethylspheroidene + AH2. The catalysed reaction is 1,1'-dihydroxy-1,1',2,2'-tetrahydrolycopene + A = 1,1'-dihydroxy-3,4-didehydro-1,2-dihydrolycopene + AH2. The protein operates within carotenoid biosynthesis. Functionally, catalyzes the introduction of a C-3,4 double bond into 1'-hydroxy-gamma-carotene and rhodopin (1-hydroxylycopene) to yield 1'-hydroxytorulene and (3E)-3,4-didehydrorhodopin, respectively. Can also use 1-hydroxy-all-trans-1,2-dihydro-neurosporene, 1,1'-dihydroxy-1,1',2,2'-tetrahydroneurosporene and 1,1'-dihydroxy-1,1',2,2'-tetrahydrolycopene. Probably involved in the synthesis of myxol, a gamma-carotene derivative. May use FAD as a proton acceptor. The chain is 1-hydroxycarotenoid 3,4-desaturase from Nonlabens dokdonensis (strain DSM 17205 / KCTC 12402 / DSW-6) (Donghaeana dokdonensis).